Reading from the N-terminus, the 258-residue chain is Imidazole glycerol phosphate synthase subunit HisF (258 aa).

Catalysis depends on residues D11 and D130.

Belongs to the HisA/HisF family. As to quaternary structure, heterodimer of HisH and HisF.

It localises to the cytoplasm. The enzyme catalyses 5-[(5-phospho-1-deoxy-D-ribulos-1-ylimino)methylamino]-1-(5-phospho-beta-D-ribosyl)imidazole-4-carboxamide + L-glutamine = D-erythro-1-(imidazol-4-yl)glycerol 3-phosphate + 5-amino-1-(5-phospho-beta-D-ribosyl)imidazole-4-carboxamide + L-glutamate + H(+). Its pathway is amino-acid biosynthesis; L-histidine biosynthesis; L-histidine from 5-phospho-alpha-D-ribose 1-diphosphate: step 5/9. Its function is as follows. IGPS catalyzes the conversion of PRFAR and glutamine to IGP, AICAR and glutamate. The HisF subunit catalyzes the cyclization activity that produces IGP and AICAR from PRFAR using the ammonia provided by the HisH subunit. The chain is Imidazole glycerol phosphate synthase subunit HisF from Haemophilus influenzae (strain PittEE).